We begin with the raw amino-acid sequence, 338 residues long: m7GpppX diphosphatase (338 aa).

Residues 1–36 are disordered; sequence MADTAPQLKRKREQEAEEAETPSTEEKEAGVGNGTS. At Ala2 the chain carries N-acetylalanine. The short motif at 9 to 12 is the nuclear localization signal (NLS) element; the sequence is KRKR. A phosphoserine mark is found at Ser23 and Ser100. Lys137 and Lys141 each carry N6-acetyllysine. The short motif at 141-153 is the nuclear export sequence (NES) element; sequence KYMRQDLRLIRET. Residues Trp174, Glu184, Asp204, Lys206, and 267 to 278 each bind substrate; that span reads HYLPSYYHLHVH. The Histidine triad motif motif lies at 274-278; sequence HLHVH. Residue His276 is the Nucleophile of the active site.

It belongs to the HIT family. Homodimer. Associates with components of the exosome multienzyme ribonuclease complex, such as EXOSC3 and EXOSC4. Interacts with NDOR1.

The protein resides in the cytoplasm. It localises to the nucleus. The catalysed reaction is a 5'-end (N(7)-methyl 5'-triphosphoguanosine)-ribonucleoside in mRNA + H2O = N(7)-methyl-GMP + a 5'-end diphospho-ribonucleoside in mRNA + 2 H(+). With respect to regulation, the hydrolytic product 7-methylguanosine diphosphate (m7GDP) efficiently inhibits the decapping scavenger activity and acts as a competitive inhibitor in vitro. Inhibited by 2,4-diaminoquinazoline. Its function is as follows. Decapping scavenger enzyme that catalyzes the cleavage of a residual cap structure following the degradation of mRNAs by the 3'-&gt;5' exosome-mediated mRNA decay pathway. Hydrolyzes cap analog structures like 7-methylguanosine nucleoside triphosphate (m7GpppG) with up to 10 nucleotide substrates (small capped oligoribonucleotides) and specifically releases 5'-phosphorylated RNA fragments and 7-methylguanosine monophosphate (m7GMP). Cleaves cap analog structures like tri-methyl guanosine nucleoside triphosphate (m3(2,2,7)GpppG) with very poor efficiency. Does not hydrolyze unmethylated cap analog (GpppG) and shows no decapping activity on intact m7GpppG-capped mRNA molecules longer than 25 nucleotides. Does not hydrolyze 7-methylguanosine diphosphate (m7GDP) to m7GMP. May also play a role in the 5'-&gt;3 mRNA decay pathway; m7GDP, the downstream product released by the 5'-&gt;3' mRNA mediated decapping activity, may be also converted by DCPS to m7GMP. Binds to m7GpppG and strongly to m7GDP. Plays a role in first intron splicing of pre-mRNAs. Inhibits activation-induced cell death. The chain is m7GpppX diphosphatase (Dcps) from Mus musculus (Mouse).